The following is a 280-amino-acid chain: Energy-coupling factor transporter ATP-binding protein EcfA1 (280 aa).

The ABC transporter domain occupies 7 to 241 (IEVAHLKYEY…GQRLLDLGLD (235 aa)). Residue 41 to 48 (GHNGSGKS) participates in ATP binding.

The protein belongs to the ABC transporter superfamily. Energy-coupling factor EcfA family. As to quaternary structure, forms a stable energy-coupling factor (ECF) transporter complex composed of 2 membrane-embedded substrate-binding proteins (S component), 2 ATP-binding proteins (A component) and 2 transmembrane proteins (T component).

It is found in the cell membrane. Functionally, ATP-binding (A) component of a common energy-coupling factor (ECF) ABC-transporter complex. Unlike classic ABC transporters this ECF transporter provides the energy necessary to transport a number of different substrates. This is Energy-coupling factor transporter ATP-binding protein EcfA1 from Latilactobacillus sakei subsp. sakei (strain 23K) (Lactobacillus sakei subsp. sakei).